The primary structure comprises 390 residues: Dynein regulatory complex subunit 5 (390 aa).

LRR repeat units lie at residues 182-205, 210-233, and 238-261; these read TETL…MLAS, NLSI…ALAK, and HSVI…SLAR.

The protein belongs to the DRC5 family. Component of the nexin-dynein regulatory complex (N-DRC). Interacts with DRC1, DRC2, DRC3, DRC4, DRC7 and DRC11.

It localises to the cell projection. The protein resides in the cilium. It is found in the flagellum. Its subcellular location is the cytoplasm. The protein localises to the cytoskeleton. It localises to the flagellum axoneme. Its function is as follows. Component of the nexin-dynein regulatory complex (N-DRC) a key regulator of ciliary/flagellar motility which maintains the alignment and integrity of the distal axoneme and regulates microtubule sliding in motile axonemes. May play a role in the assembly of N-DRC. This chain is Dynein regulatory complex subunit 5, found in Chlamydomonas reinhardtii (Chlamydomonas smithii).